A 449-amino-acid polypeptide reads, in one-letter code: Gamma-aminobutyric acid receptor subunit delta (449 aa).

A signal peptide spans 1–24; sequence MDVLGWLLLPLLLLCTQPHHGARA. Residues 25–251 are Extracellular-facing; the sequence is MNDIGDYVGS…QLRRNRGVYI (227 aa). N-linked (GlcNAc...) asparagine glycans are attached at residues asparagine 103 and asparagine 106. A disulfide bridge links cysteine 164 with cysteine 178. Residues 252–271 form a helical membrane-spanning segment; the sequence is IQSYMPSVLLVAMSWVSFWI. The Cytoplasmic segment spans residues 272 to 275; sequence SQAA. The helical transmembrane segment at 276 to 298 threads the bilayer; it reads VPARVSLGITTVLTMTTLMVSAR. The Extracellular portion of the chain corresponds to 299–308; that stretch reads SSLPRASAIK. The helical transmembrane segment at 309–331 threads the bilayer; sequence ALDVYFWICYVFVFAALVEYAFA. Residues 332 to 423 lie on the Cytoplasmic side of the membrane; that stretch reads HFNADYRKKR…SRLKPIDADT (92 aa). The residue at position 390 (serine 390) is a Phosphoserine. Residues 424–446 traverse the membrane as a helical segment; sequence IDIYARAVFPAAFAAVNIIYWAA. The Extracellular segment spans residues 447–449; it reads YTM.

This sequence belongs to the ligand-gated ion channel (TC 1.A.9) family. Gamma-aminobutyric acid receptor (TC 1.A.9.5) subfamily. GABRD sub-subfamily. Heteropentamer, formed by a combination of alpha (GABRA1-6), beta (GABRB1-3), gamma (GABRG1-3), delta (GABRD), epsilon (GABRE), rho (GABRR1-3), pi (GABRP) and theta (GABRQ) chains, each subunit exhibiting distinct physiological and pharmacological properties.

The protein resides in the cell membrane. It carries out the reaction chloride(in) = chloride(out). Delta subunit of the heteropentameric ligand-gated chloride channel gated by gamma-aminobutyric acid (GABA), a major inhibitory neurotransmitter in the brain. GABA-gated chloride channels, also named GABA(A) receptors (GABAAR), consist of five subunits arranged around a central pore and contain GABA active binding site(s) located at the alpha and beta subunit interface(s). When activated by GABA, GABAARs selectively allow the flow of chloride anions across the cell membrane down their electrochemical gradient. GABAARs containing delta/GABRD subunits are predominantly expressed and located in extrasynaptic or perisynaptic positions on hippocampus and cerebellar granule cells, and contribute to the tonic GABAergic inhibition. GABAAR containing alpha-4-beta-3-delta subunits can simultaneously bind GABA and histamine where histamine binds at the interface of two neighboring beta subunits, which may be involved in the regulation of sleep and wakefulness. This Mus musculus (Mouse) protein is Gamma-aminobutyric acid receptor subunit delta.